Reading from the N-terminus, the 396-residue chain is Protein ANTAGONIST OF LIKE HETEROCHROMATIN PROTEIN 1 (396 aa).

Composition is skewed to basic residues over residues 1-12 and 20-29; these read MAPVKQKKKNKK and KLAKNKEKKR. The interval 1–29 is disordered; that stretch reads MAPVKQKKKNKKKPLDKAKKLAKNKEKKR. Positions 6–13 match the Nuclear localization signal motif; that stretch reads QKKKNKKK. In terms of domain architecture, DDE Tnp4 spans 183 to 348; it reads IDTTHIIMTL…IILVCCLLHN (166 aa).

It belongs to the HARBI1 family. Interacts with core components of POLYCOMB REPRESSIVE COMPLEX 2 (PRC2), a PcG protein complex with H3K27me3 histone methyltransferase activity. Associates with plant-specific PRC2 accessory components such as MSI1, EMF2, VRN2, FIE and CLF. It depends on a divalent metal cation as a cofactor. As to expression, expressed in roots, inflorescence stems, seedlings, leaves, flower buds, inflorescences, and siliques.

The protein localises to the nucleus. Transposase-derived protein that may have nuclease activity. Antagonist of polycomb-group (PcG) protein-mediated chromatin silencing, probably by preventing the association of POLYCOMB REPRESSIVE COMPLEX 2 (PRC2) with its accessory components. Needed for full reactivation of several floral homeotic genes that are repressed by PcG. The chain is Protein ANTAGONIST OF LIKE HETEROCHROMATIN PROTEIN 1 from Arabidopsis thaliana (Mouse-ear cress).